The sequence spans 463 residues: Interferon-inducible GTPase 5 (463 aa).

Positions 53 to 235 (IRLEVGVTGE…PTLVSTWEHD (183 aa)) constitute an IRG-type G domain. Residues 62–69 (ESGAGKSS), 87–91 (TGVME), 169–171 (KVD), and 216–218 (SNL) each bind GTP. Residues Ser247 and Ser304 each carry the phosphoserine modification. The segment at 404–437 (LEDDEPQPEVSLEVASDNGVEKGGSGEGGGEEAP) is disordered.

Belongs to the TRAFAC class dynamin-like GTPase superfamily. IRG family. Abundantly expressed in semen (at protein level).

The protein localises to the cell projection. It is found in the cilium. Its subcellular location is the flagellum. It localises to the lipid droplet. The enzyme catalyses GTP + H2O = GDP + phosphate + H(+). Required for sperm motility and therefore male fertility, via positive regulation of spermatozoa fibrous sheath formation. This Homo sapiens (Human) protein is Interferon-inducible GTPase 5.